We begin with the raw amino-acid sequence, 119 residues long: Large ribosomal subunit protein bL20 (119 aa).

The protein belongs to the bacterial ribosomal protein bL20 family.

In terms of biological role, binds directly to 23S ribosomal RNA and is necessary for the in vitro assembly process of the 50S ribosomal subunit. It is not involved in the protein synthesizing functions of that subunit. The protein is Large ribosomal subunit protein bL20 of Xylella fastidiosa (strain M23).